Here is a 65-residue protein sequence, read N- to C-terminus: Large ribosomal subunit protein bL35 (65 aa).

A compositionally biased stretch (basic residues) spans 1–16; that stretch reads MPKMKTKSSAKKRFKV. The tract at residues 1-26 is disordered; it reads MPKMKTKSSAKKRFKVRSSGGIKRSQ.

Belongs to the bacterial ribosomal protein bL35 family.

The chain is Large ribosomal subunit protein bL35 from Azoarcus sp. (strain BH72).